Consider the following 582-residue polypeptide: MAESAESGGPPGAQDSAADSGPAEPKIMKVTVKTPKEKEEFAVPENSSVQQFKEEISKRFKSHIDQLVLIFAGKILKDQDTLSQHGIHDGLTVHLVIKTQNRPQDNSAQQTNTTGNSVTSSPAPDSNPTSGPAANSSFGLGGLGGLAGLSSLGLNTTNFSELQSQMQRQLLSNPEMMVQIMENPFVQSMLSNPDLMRQLIMANPQMQQLIQRNPEISHMLNNPNIMRQTLELARNPAMMQEMMRNQERDLSNLESIPGGYNALRRMYTDIQEPMLNAAQEQFGGNPFASLVSSPSSAEGTQPSRTENRDPLPNPWAPQTPQSSPASGSTGSTTNTVSTSAGNATSTPAGQGTSGPNLVPGAGASMFNTPGMQSLLQQITENPQLMQNMLSAPYMRSMMQSLSQNPDLAAQMMLNNPLFAGNPQLQEQMRQQLPTFLQQMQNPDTLSAMSNPRAMQALLQIQQGLQTLATEAPGLIPGFTPGLAAGNSGGPAGTTAPSTAPGEDTNPQGGAAEPGHQQFIQQMLQALAGVNPQLQSPEVRFQQQLEQLSAMGFLNREANLQALIATGGDINAAIERLLGSQPS.

Disordered stretches follow at residues 1–26 (MAES…AEPK) and 102–136 (RPQD…AANS). Ala-2 is modified (N-acetylalanine). The Ubiquitin-like domain occupies 28–102 (MKVTVKTPKE…VHLVIKTQNR (75 aa)). Polar residues predominate over residues 102 to 135 (RPQDNSAQQTNTTGNSVTSSPAPDSNPTSGPAAN). The interaction with UBXN4 stretch occupies residues 169–422 (QLLSNPEMMV…LNNPLFAGNP (254 aa)). STI1 domains are found at residues 173-201 (NPEM…QLIM) and 203-242 (NPQM…MQEM). A disordered region spans residues 285-365 (NPFASLVSSP…NLVPGAGASM (81 aa)). A compositionally biased stretch (polar residues) spans 290 to 304 (LVSSPSSAEGTQPSR). Over residues 318-346 (QTPQSSPASGSTGSTTNTVSTSAGNATST) the composition is skewed to low complexity. STI1 domains lie at 381-428 (NPQL…QEQM) and 432-464 (LPTF…QQGL). The segment at 481–513 (GLAAGNSGGPAGTTAPSTAPGEDTNPQGGAAEP) is disordered. In terms of domain architecture, UBA spans 539 to 579 (RFQQQLEQLSAMGFLNREANLQALIATGGDINAAIERLLGS).

Monomer and homodimer. Heterodimer with UBQLN2. Binds CD47. Binds NBL1. Binds GABRA1, GABRA2, GABRA3, GABRA6, GABRB1, GABRB2 and GABRB3. Binds UBE3A, BTRC, P4HB and MTOR. Interacts with the proteasome 19S subunit. Interacts (via ubiquitin-like domain) with TREX1; the interaction is direct and may control TREX1 subcellular location. Forms a complex with UBXN4 and VCP. Interacts (via UBA domain) with UBQLN4 (via ubiquitin-like domain). Found in a complex with UBQLN2 and MAP1LC3A/B/C. The monomeric form interacts with PSEN1 and PSEN2. Interacts with ORAI1. Interacts (via UBA domain) with TICAM1. Interacts with EPS15. Interacts (via UBA domain) with UBA52 and (via ubiquitin-like domain) with PSMD3 and PSMD4. Interacts with HERPUD1. Interacts with MAP1LC3A/B/C in the presence of UBQLN4. Interacts (via ubiquitin-like domain) with EPS15 (via UIM domains) and both the ubiquitinated and non-ubiquitinated forms can interact with EPS15. Interacts (via ubiquitin-like domain) with EPS15L1, HGS (via UIM domain) and STAM2 (via UIM domain). Interacts with BCL2L10/BCL-B; in the cytoplasm. In terms of processing, degraded during both macroautophagy and during chaperone-mediated autophagy (CMA). Post-translationally, phosphorylated. Ubiquitinated.

The protein resides in the nucleus. It is found in the cytoplasm. The protein localises to the endoplasmic reticulum. It localises to the cytoplasmic vesicle. Its subcellular location is the autophagosome. The protein resides in the cell membrane. In terms of biological role, plays an important role in the regulation of different protein degradation mechanisms and pathways including ubiquitin-proteasome system (UPS), autophagy and endoplasmic reticulum-associated protein degradation (ERAD) pathway. Mediates the proteasomal targeting of misfolded or accumulated proteins for degradation by binding (via UBA domain) to their polyubiquitin chains and by interacting (via ubiquitin-like domain) with the subunits of the proteasome. Plays a role in the ERAD pathway via its interaction with ER-localized proteins UBXN4, VCP and HERPUD1 and may form a link between the polyubiquitinated ERAD substrates and the proteasome. Plays a role in unfolded protein response (UPR) by attenuating the induction of UPR-inducible genes, DDTI3/CHOP, HSPA5 and PDIA2 during ER stress. Involved in the regulation of macroautophagy and autophagosome formation; required for maturation of autophagy-related protein LC3 from the cytosolic form LC3-I to the membrane-bound form LC3-II and may assist in the maturation of autophagosomes to autolysosomes by mediating autophagosome-lysosome fusion. Negatively regulates the TICAM1/TRIF-dependent toll-like receptor signaling pathway by decreasing the abundance of TICAM1 via the autophagic pathway. Promotes the ubiquitination and lysosomal degradation of ORAI1, consequently down-regulating the ORAI1-mediated Ca2+ mobilization. Suppresses the maturation and proteasomal degradation of amyloid beta A4 protein (A4) by stimulating the lysine 63 (K63)-linked polyubiquitination. Delays the maturation of A4 by sequestering it in the Golgi apparatus and preventing its transport to the cell surface for subsequent processing. Promotes the surface expression of GABA-A receptors. Ubiquitinates BCL2L10 and thereby stabilizes protein abundance. The sequence is that of Ubiquilin-1 (Ubqln1) from Rattus norvegicus (Rat).